Consider the following 414-residue polypeptide: CinA-like protein (414 aa).

It belongs to the CinA family.

The polypeptide is CinA-like protein (Acidobacterium capsulatum (strain ATCC 51196 / DSM 11244 / BCRC 80197 / JCM 7670 / NBRC 15755 / NCIMB 13165 / 161)).